We begin with the raw amino-acid sequence, 167 residues long: 16S rRNA aminocarboxypropyltransferase (167 aa).

S-adenosyl-L-methionine is bound by residues Thr17, Val62, Leu84, Tyr99, and Ser103.

It belongs to the TDD superfamily. TSR3 family.

The protein resides in the cytoplasm. The enzyme catalyses an N(1)-methylpseudouridine in rRNA + S-adenosyl-L-methionine = N(1)-methyl-N(3)-[(3S)-3-amino-3-carboxypropyl]pseudouridine in rRNA + S-methyl-5'-thioadenosine + H(+). Its function is as follows. Aminocarboxypropyltransferase that catalyzes the aminocarboxypropyl transfer on pseudouridine corresponding to position 914 in M.jannaschii 16S rRNA. It constitutes the last step in biosynthesis of the hypermodified N1-methyl-N3-(3-amino-3-carboxypropyl) pseudouridine (m1acp3-Psi). The protein is 16S rRNA aminocarboxypropyltransferase of Sulfurisphaera tokodaii (strain DSM 16993 / JCM 10545 / NBRC 100140 / 7) (Sulfolobus tokodaii).